Reading from the N-terminus, the 161-residue chain is Crossover junction endodeoxyribonuclease RuvC (161 aa).

Active-site residues include aspartate 7, glutamate 67, and aspartate 140. Aspartate 7, glutamate 67, and aspartate 140 together coordinate Mg(2+).

It belongs to the RuvC family. In terms of assembly, homodimer which binds Holliday junction (HJ) DNA. The HJ becomes 2-fold symmetrical on binding to RuvC with unstacked arms; it has a different conformation from HJ DNA in complex with RuvA. In the full resolvosome a probable DNA-RuvA(4)-RuvB(12)-RuvC(2) complex forms which resolves the HJ. The cofactor is Mg(2+).

Its subcellular location is the cytoplasm. It carries out the reaction Endonucleolytic cleavage at a junction such as a reciprocal single-stranded crossover between two homologous DNA duplexes (Holliday junction).. In terms of biological role, the RuvA-RuvB-RuvC complex processes Holliday junction (HJ) DNA during genetic recombination and DNA repair. Endonuclease that resolves HJ intermediates. Cleaves cruciform DNA by making single-stranded nicks across the HJ at symmetrical positions within the homologous arms, yielding a 5'-phosphate and a 3'-hydroxyl group; requires a central core of homology in the junction. The consensus cleavage sequence is 5'-(A/T)TT(C/G)-3'. Cleavage occurs on the 3'-side of the TT dinucleotide at the point of strand exchange. HJ branch migration catalyzed by RuvA-RuvB allows RuvC to scan DNA until it finds its consensus sequence, where it cleaves and resolves the cruciform DNA. The chain is Crossover junction endodeoxyribonuclease RuvC from Natranaerobius thermophilus (strain ATCC BAA-1301 / DSM 18059 / JW/NM-WN-LF).